Consider the following 695-residue polypeptide: NADPH--cytochrome P450 reductase (695 aa).

Topologically, residues 1–8 are lumenal; that stretch reads MAQLDTLD. A helical membrane pass occupies residues 9 to 31; the sequence is IVVLVVLLVGSVAYFTKGSYWAV. The Cytoplasmic portion of the chain corresponds to 32–695; sequence PKDPYAAANS…SGSYQEDVWS (664 aa). The Flavodoxin-like domain maps to 66-221; sequence CVIFYGSQTG…DFLAWKEPMW (156 aa). FMN is bound by residues 72-77, 123-126, 169-178, and Asp204; these read SQTGTA, ATYG, and LGNNTYEHYN. One can recognise an FAD-binding FR-type domain in the interval 277–538; the sequence is HNPYIAPIVE…HVRHSNFKLP (262 aa). Arg296 serves as a coordination point for NADP(+). FAD is bound by residues 451-454, 469-471, and 486-489; these read RYYS, TAV, and GVTT. Residues Thr552, 614–615, 620–624, and Glu656 contribute to the NADP(+) site; these read SR and KVYVQ. FAD is bound at residue Trp694.

It belongs to the NADPH--cytochrome P450 reductase family. The protein in the N-terminal section; belongs to the flavodoxin family. In the C-terminal section; belongs to the flavoprotein pyridine nucleotide cytochrome reductase family. The cofactor is FAD. FMN is required as a cofactor.

It is found in the endoplasmic reticulum membrane. The protein resides in the mitochondrion outer membrane. The protein localises to the cell membrane. The catalysed reaction is 2 oxidized [cytochrome P450] + NADPH = 2 reduced [cytochrome P450] + NADP(+) + H(+). In terms of biological role, this enzyme is required for electron transfer from NADP to cytochrome P450 in microsomes. It can also provide electron transfer to heme oxygenase and cytochrome B5. Involved in ergosterol biosynthesis. In Aspergillus fumigatus (strain ATCC MYA-4609 / CBS 101355 / FGSC A1100 / Af293) (Neosartorya fumigata), this protein is NADPH--cytochrome P450 reductase.